The sequence spans 158 residues: 6,7-dimethyl-8-ribityllumazine synthase (158 aa).

5-amino-6-(D-ribitylamino)uracil is bound by residues Phe22, 57–59, and 84–86; these read AYE and TVI. 89 to 90 is a (2S)-2-hydroxy-3-oxobutyl phosphate binding site; that stretch reads GT. His92 serves as the catalytic Proton donor. Residue Phe117 coordinates 5-amino-6-(D-ribitylamino)uracil. (2S)-2-hydroxy-3-oxobutyl phosphate is bound at residue Arg131.

Belongs to the DMRL synthase family. As to quaternary structure, forms an icosahedral capsid composed of 60 subunits, arranged as a dodecamer of pentamers.

The catalysed reaction is (2S)-2-hydroxy-3-oxobutyl phosphate + 5-amino-6-(D-ribitylamino)uracil = 6,7-dimethyl-8-(1-D-ribityl)lumazine + phosphate + 2 H2O + H(+). It functions in the pathway cofactor biosynthesis; riboflavin biosynthesis; riboflavin from 2-hydroxy-3-oxobutyl phosphate and 5-amino-6-(D-ribitylamino)uracil: step 1/2. Functionally, catalyzes the formation of 6,7-dimethyl-8-ribityllumazine by condensation of 5-amino-6-(D-ribitylamino)uracil with 3,4-dihydroxy-2-butanone 4-phosphate. This is the penultimate step in the biosynthesis of riboflavin. This is 6,7-dimethyl-8-ribityllumazine synthase from Pectobacterium carotovorum subsp. carotovorum (strain PC1).